Consider the following 195-residue polypeptide: Transmembrane protein 126A (195 aa).

Topologically, residues 1–33 are mitochondrial matrix; the sequence is MENHKSNNKENITIVDISRKINQLPEAERNLLE. Residues 34-54 traverse the membrane as a helical segment; it reads NGSVYVGLNAALCGLIANSLF. The Mitochondrial intermembrane segment spans residues 55–56; the sequence is RR. Residues 57 to 77 traverse the membrane as a helical segment; that stretch reads ILNVTKARIAAGLPMAGIPFL. Residues 78 to 110 are Mitochondrial matrix-facing; the sequence is TTDLTYRCFVSFPLNTGDLDCETCTITRSGLTG. Residues 111–131 traverse the membrane as a helical segment; it reads LVIGGLYPVFLAIPVNGGLAA. Residues 132-158 are Mitochondrial intermembrane-facing; sequence RYQSALLPHKGNILSYWIRTSKPVFRK. Residues 159–175 traverse the membrane as a helical segment; the sequence is MLFPILLQTMFSAYLGS. The Mitochondrial matrix portion of the chain corresponds to 176-195; the sequence is EQYKLLIKALQLSEPGKEIH.

It belongs to the TMEM126 family. In terms of assembly, interacts with OXA1L; promoting cotranslational quality control in mitochondria. Strongly expressed in brain, cerebellum, skeletal muscle, testis. High expression also found in fetal brain, fetal retinal pigmentary epithelium, and fetal retina. Highly expressed in retinal ganglion cells.

The protein resides in the mitochondrion inner membrane. Protein required for the cotranslational protein quality control in the inner membrane of the mitochondria. Associates with newly synthesized polypeptides and may act as a chaperone that cooperates with OXA1L for the insertion of newly synthesized mitochondrial proteins into the inner membrane. Required for the assembly of the ND4 module of mitochondrial complex I. This is Transmembrane protein 126A from Homo sapiens (Human).